The primary structure comprises 710 residues: ARM REPEAT PROTEIN INTERACTING WITH ABF2 (710 aa).

Positions 1–35 (MDQQPERREGRSFPERKGQKRKLEEGAAAVEDREI) are disordered. ARM repeat units follow at residues 85–127 (EDLV…EKGS), 138–185 (PEYQ…NLAH), 188–227 (SSIKTRVRVEGGIPPLVELLEFSDSKVQRAAAGALRTLAF), 230–269 (DDNKNQIVECNALPTLILMLGSEDAAIHYEAVGVIGNLVH), 272–311 (PHIKKEVLTAGALQPVIGLLSSCCPESQREAALLLGQFAS), 314–353 (SDCKVHIVQRGAVRPLIEMLQSPDVQLKEMSAFALGRLAQ), 355–394 (AHNQAGIAHSGGLGPLLKLLDSRNGSLQHNAAFALYGLAD), 429–468 (LKRLEEKIHGRVLRHLLYLMRISEKSIQRRVALALAHLCS), and 470–509 (EDQRTIFIDDNGLELLLGLLGSLNTKQQLDGAAALYKLAN). The 68-residue stretch at 541-608 (SDVTFLVEGR…IYTGSVDITN (68 aa)) folds into the BTB domain.

In terms of assembly, interacts with ABF2. Interacts with DUF7/AIP1. As to expression, detected in embryos and most of the vegetative and reproductive organs.

It localises to the nucleus. It functions in the pathway protein modification; protein ubiquitination. May act as a substrate-specific adapter of an E3 ubiquitin-protein ligase complex (CUL3-RBX1-BTB) which mediates the ubiquitination and subsequent proteasomal degradation of target proteins. Acts as a positive regulator of ABA response via the modulation of the transcriptional activity of ABF2, a transcription factor which controls ABA-dependent gene expression via the G-box-type ABA-responsive elements. Negative regulator of seed germination and young seedling growth. This is ARM REPEAT PROTEIN INTERACTING WITH ABF2 (ARIA) from Arabidopsis thaliana (Mouse-ear cress).